We begin with the raw amino-acid sequence, 417 residues long: MAAPGSARRPLLLLLLLLLLGLMHCASAAMFMVKNGNGTACIMANFSAAFSVNYDTKSGPKNMTFDLPSDATVVLNRSSCGKENTSDPSLVIAFGRGHTLTLNFTRNATRYSVQLMSFVYNLSDTHLFPNASSKEIKTVESITDIRADIDKKYRCVSGTQVHMNNVTVTLHDATIQAYLSNSSFSRGETRCEQDRPSPTTAPPAPPSPSPSPVPKSPSVDKYNVSGTNGTCLLASMGLQLNLTYERKDNTTVTRLLNINPNKTSASGSCGAHLVTLELHSEGTTVLLFQFGMNASSSRFFLQGIQLNTILPDARDPAFKAANGSLRALQATVGNSYKCNAEEHVRVTKAFSVNIFKVWVQAFKVEGGQFGSVEECLLDENSMLIPIAVGGALAGLVLIVLIAYLVGRKRSHAGYQTI.

Residues 1-28 (MAAPGSARRPLLLLLLLLLLGLMHCASA) form the signal peptide. The segment at 29–194 (AMFMVKNGNG…SRGETRCEQD (166 aa)) is first lumenal domain. The Lumenal portion of the chain corresponds to 29–382 (AMFMVKNGNG…EECLLDENSM (354 aa)). 2 N-linked (GlcNAc...) asparagine glycosylation sites follow: Asn37 and Asn45. A disulfide bond links Cys41 and Cys80. The N-linked (GlcNAc...) (polylactosaminoglycan) asparagine glycan is linked to Asn62. Residues Asn76, Asn84, Asn103, and Asn107 are each glycosylated (N-linked (GlcNAc...) asparagine). N-linked (GlcNAc...) (polylactosaminoglycan) asparagine glycosylation is found at Asn121 and Asn130. Cys155 and Cys191 are oxidised to a cystine. N-linked (GlcNAc...) asparagine glycans are attached at residues Asn165 and Asn181. A disordered region spans residues 184-221 (FSRGETRCEQDRPSPTTAPPAPPSPSPSPVPKSPSVDK). The hinge stretch occupies residues 195–227 (RPSPTTAPPAPPSPSPSPVPKSPSVDKYNVSGT). A glycan (O-linked (GalNAc...) serine; partial) is linked at Ser197. 2 O-linked (GalNAc...) threonine glycosylation sites follow: Thr199 and Thr200. The segment covering 199 to 215 (TTAPPAPPSPSPSPVPK) has biased composition (pro residues). O-linked (GalNAc...) serine glycosylation is found at Ser207, Ser209, and Ser211. Asn223 and Asn228 each carry an N-linked (GlcNAc...) (polylactosaminoglycan) asparagine glycan. A second lumenal domain region spans residues 228 to 382 (NGTCLLASMG…EECLLDENSM (155 aa)). A disulfide bridge links Cys231 with Cys269. 5 N-linked (GlcNAc...) asparagine glycosylation sites follow: Asn241, Asn249, Asn261, Asn293, and Asn322. Cys338 and Cys375 are disulfide-bonded. The helical transmembrane segment at 383-410 (LIPIAVGGALAGLVLIVLIAYLVGRKRS) threads the bilayer. Residues 411–417 (HAGYQTI) lie on the Cytoplasmic side of the membrane.

This sequence belongs to the LAMP family. As to quaternary structure, interacts with ABCB9; this interaction strongly stabilizes ABCB9 and protects ABCB9 against lysosomal degradation. Interacts with FURIN. Interacts with TMEM175; inhibiting the proton channel activity of TMEM175. (Microbial infection) Interacts with Lassa virus protein glycoprotein. In terms of assembly, (Microbial infection) Interacts with mumps virus protein F; this interaction promotes protein F cleavage by FURIN. In terms of processing, O- and N-glycosylated; some of the 18 N-linked glycans are polylactosaminoglycans. Post-translationally, (Microbial infection) The glycosylation of Asn-76 is essential for Lassa virus entry into cells.

It is found in the lysosome membrane. The protein localises to the endosome membrane. The protein resides in the late endosome membrane. It localises to the cell membrane. Its subcellular location is the cytolytic granule membrane. Functionally, lysosomal membrane glycoprotein which plays an important role in lysosome biogenesis, lysosomal pH regulation, autophagy and cholesterol homeostasis. Acts as an important regulator of lysosomal lumen pH regulation by acting as a direct inhibitor of the proton channel TMEM175, facilitating lysosomal acidification for optimal hydrolase activity. Also plays an important role in NK-cells cytotoxicity. Mechanistically, participates in cytotoxic granule movement to the cell surface and perforin trafficking to the lytic granule. In addition, protects NK-cells from degranulation-associated damage induced by their own cytotoxic granule content. Presents carbohydrate ligands to selectins. (Microbial infection) Acts as a receptor for Lassa virus glycoprotein. Also promotes fusion of the virus with host membrane in less acidic endosomes. Its function is as follows. (Microbial infection) Supports the FURIN-mediated cleavage of mumps virus fusion protein F by interacting with both FURIN and the unprocessed form but not the processed form of the viral protein F. The chain is Lysosome-associated membrane glycoprotein 1 from Homo sapiens (Human).